We begin with the raw amino-acid sequence, 597 residues long: Arginine--tRNA ligase (597 aa).

A 'HIGH' region motif is present at residues 137–147 (PNIAKEMHVGH).

The protein belongs to the class-I aminoacyl-tRNA synthetase family. Monomer.

The protein resides in the cytoplasm. The catalysed reaction is tRNA(Arg) + L-arginine + ATP = L-arginyl-tRNA(Arg) + AMP + diphosphate. The chain is Arginine--tRNA ligase from Parasynechococcus marenigrum (strain WH8102).